Reading from the N-terminus, the 205-residue chain is MNDFTLNAQVRSDLGKGASRRLRRNAALVPAVIYGGNNAPQSISILAKDFAKLLENEASFSHVLNLNVDGQNESVLIKALQRHPAKGFVLHADFVRVVAGHKLTATVPLHFINQETSVGVKKQGGEILHNLNEVEVSCMPQDLPEFIEVDMANVEVGQVLHMTDIKLPKGVELVALAHGSDLPVANVHAPRVSKEDAPKEEDAAE.

Belongs to the bacterial ribosomal protein bL25 family. CTC subfamily. Part of the 50S ribosomal subunit; part of the 5S rRNA/L5/L18/L25 subcomplex. Contacts the 5S rRNA. Binds to the 5S rRNA independently of L5 and L18.

This is one of the proteins that binds to the 5S RNA in the ribosome where it forms part of the central protuberance. The polypeptide is Large ribosomal subunit protein bL25 (Stutzerimonas stutzeri (strain A1501) (Pseudomonas stutzeri)).